The following is a 216-amino-acid chain: LexA repressor (216 aa).

Residues 28–48 (RAEIAAEFGFSSPNAAEEHLR) constitute a DNA-binding region (H-T-H motif). Catalysis depends on for autocatalytic cleavage activity residues Ser-134 and Lys-171.

The protein belongs to the peptidase S24 family. As to quaternary structure, homodimer.

It carries out the reaction Hydrolysis of Ala-|-Gly bond in repressor LexA.. Functionally, represses a number of genes involved in the response to DNA damage (SOS response), including recA and lexA. In the presence of single-stranded DNA, RecA interacts with LexA causing an autocatalytic cleavage which disrupts the DNA-binding part of LexA, leading to derepression of the SOS regulon and eventually DNA repair. The polypeptide is LexA repressor (Ralstonia nicotianae (strain ATCC BAA-1114 / GMI1000) (Ralstonia solanacearum)).